The sequence spans 104 residues: Ig kappa chain b5 variant C region (104 aa).

The Ig-like domain maps to 5–100 (PTVLIFPPSP…SGSPVVQSFS (96 aa)). Residues C26 and C85 are joined by a disulfide bond.

This Oryctolagus cuniculus (Rabbit) protein is Ig kappa chain b5 variant C region.